Here is a 456-residue protein sequence, read N- to C-terminus: Methylenetetrahydrofolate--tRNA-(uracil-5-)-methyltransferase TrmFO (456 aa).

9–14 is a binding site for FAD; sequence GGGMAG.

The protein belongs to the MnmG family. TrmFO subfamily. It depends on FAD as a cofactor.

Its subcellular location is the cytoplasm. The catalysed reaction is uridine(54) in tRNA + (6R)-5,10-methylene-5,6,7,8-tetrahydrofolate + NADH + H(+) = 5-methyluridine(54) in tRNA + (6S)-5,6,7,8-tetrahydrofolate + NAD(+). The enzyme catalyses uridine(54) in tRNA + (6R)-5,10-methylene-5,6,7,8-tetrahydrofolate + NADPH + H(+) = 5-methyluridine(54) in tRNA + (6S)-5,6,7,8-tetrahydrofolate + NADP(+). Catalyzes the folate-dependent formation of 5-methyl-uridine at position 54 (M-5-U54) in all tRNAs. In Novosphingobium aromaticivorans (strain ATCC 700278 / DSM 12444 / CCUG 56034 / CIP 105152 / NBRC 16084 / F199), this protein is Methylenetetrahydrofolate--tRNA-(uracil-5-)-methyltransferase TrmFO.